We begin with the raw amino-acid sequence, 2219 residues long: RNA-directed RNA polymerase L (2219 aa).

The tract at residues 26–289 is endonuclease; sequence KLAFLVQTEP…TTEDDVEYLI (264 aa). Mn(2+) contacts are provided by Glu51, Asp89, and Glu102. The active site involves Lys115. One can recognise a RdRp catalytic domain in the interval 1177 to 1373; that stretch reads LSMKLNVSLA…YMSDQLNKFV (197 aa). Asp1335 contacts Mg(2+).

This sequence belongs to the Bunyavirales RNA polymerase family. In terms of assembly, homomultimer; the oligomeric structure is essential for the polymerase activity. Interacts with nucleoprotein N. Interacts with protein Z; this interaction inhibits viral transcription and replication, Z partially blocks the product exit tunnel for the releasing nascent RNA product. Mn(2+) is required as a cofactor. Requires Mg(2+) as cofactor.

It localises to the virion. It is found in the host cytoplasm. The catalysed reaction is RNA(n) + a ribonucleoside 5'-triphosphate = RNA(n+1) + diphosphate. RNA-dependent RNA polymerase, which is responsible for the replication and transcription of the viral RNA genome using antigenomic RNA as an intermediate. During transcription, synthesizes subgenomic RNAs and assures their capping by a cap-snatching mechanism, which involves the endonuclease activity cleaving the host capped pre-mRNAs. These short capped RNAs are then used as primers for viral transcription. The 3'-end of subgenomic mRNAs molecules are heterogeneous and not polyadenylated. The replicase function is to direct synthesis of antigenomic and genomic RNA which are encapsidated and non capped. As a consequence of the use of the same enzyme for both transcription and replication, these mechanisms need to be well coordinated. These processes may be regulated by proteins N and Z in a dose-dependent manner. Z protein inhibits the viral polymerase L und thus the viral transcription and RNA synthesis. This chain is RNA-directed RNA polymerase L, found in Homo sapiens (Human).